Consider the following 793-residue polypeptide: uncharacterized protein (793 aa).

Residues 1–22 form the signal peptide; sequence MKFKYGAIFFSGFLGLSAILAA. Cys23 carries N-palmitoyl cysteine lipidation. Cys23 carries S-diacylglycerol cysteine lipidation. Disordered stretches follow at residues 181-200, 212-264, and 444-504; these read LNQK…TLTV, KIED…DDQV, and KAPS…SNNN. A compositionally biased stretch (basic and acidic residues) spans 212–227; sequence KIEDSAKANGKSDEKG. A compositionally biased stretch (polar residues) spans 237–246; the sequence is ATFSLVQLKQ. Over residues 247-264 the composition is skewed to basic and acidic residues; sequence TQEKTDDSQDTKNSDDQV. Polar residues predominate over residues 449 to 468; sequence NGENGQTNEGNSTNGEQNLL. Positions 472-485 are enriched in basic and acidic residues; it reads EVKDDSKPKEEVKS. Over residues 491-504 the composition is skewed to low complexity; that stretch reads KESSQNQGKKSNNN.

The protein belongs to the MG185/MG260 family.

Its subcellular location is the cell membrane. This is an uncharacterized protein from Mycoplasma pneumoniae (strain ATCC 29342 / M129 / Subtype 1) (Mycoplasmoides pneumoniae).